Consider the following 463-residue polypeptide: GTPase Der (463 aa).

EngA-type G domains lie at 27-190 (PVVA…PEVG) and 200-373 (RRVA…ASWD). Residues 33 to 40 (GRPNVGKS), 80 to 84 (DTGGW), 142 to 145 (NKVD), 206 to 213 (GKPNVGKS), 253 to 257 (DTAGL), and 318 to 321 (NKWD) contribute to the GTP site. Residues 374-456 (TRIATGPLNT…PIRVNVRVRE (83 aa)) form the KH-like domain.

Belongs to the TRAFAC class TrmE-Era-EngA-EngB-Septin-like GTPase superfamily. EngA (Der) GTPase family. As to quaternary structure, associates with the 50S ribosomal subunit.

Functionally, GTPase that plays an essential role in the late steps of ribosome biogenesis. The sequence is that of GTPase Der from Mycobacterium bovis (strain ATCC BAA-935 / AF2122/97).